Here is a 149-residue protein sequence, read N- to C-terminus: D-aminoacyl-tRNA deacylase (149 aa).

Positions 137–138 (GP) match the Gly-cisPro motif, important for rejection of L-amino acids motif.

Belongs to the DTD family. As to quaternary structure, homodimer.

The protein localises to the cytoplasm. The catalysed reaction is glycyl-tRNA(Ala) + H2O = tRNA(Ala) + glycine + H(+). It catalyses the reaction a D-aminoacyl-tRNA + H2O = a tRNA + a D-alpha-amino acid + H(+). An aminoacyl-tRNA editing enzyme that deacylates mischarged D-aminoacyl-tRNAs. Also deacylates mischarged glycyl-tRNA(Ala), protecting cells against glycine mischarging by AlaRS. Acts via tRNA-based rather than protein-based catalysis; rejects L-amino acids rather than detecting D-amino acids in the active site. By recycling D-aminoacyl-tRNA to D-amino acids and free tRNA molecules, this enzyme counteracts the toxicity associated with the formation of D-aminoacyl-tRNA entities in vivo and helps enforce protein L-homochirality. The chain is D-aminoacyl-tRNA deacylase from Thermosipho africanus (strain TCF52B).